A 509-amino-acid polypeptide reads, in one-letter code: DEAD-box ATP-dependent RNA helicase CshA (509 aa).

Positions 2 to 30 (QNFKELGISDKTVQTLEAMGFKEPTPIQK) match the Q motif motif. The Helicase ATP-binding domain occupies 33 to 203 (IPYALEGDDI…QQFMKAPKII (171 aa)). ATP is bound at residue 46–53 (AQTGTGKT). The short motif at 150–153 (DEAD) is the DEAD box element. A Helicase C-terminal domain is found at 214–375 (QIDEYYTIVK…LRPPHRKEVL (162 aa)). Composition is skewed to basic residues over residues 440-459 (ARKN…KRGN) and 467-482 (RRSK…KKNQ). The segment at 440 to 509 (ARKNRSSKGG…KGRTFADHQK (70 aa)) is disordered. Positions 483–492 (KKFDRRDKQQ) are enriched in basic and acidic residues.

It belongs to the DEAD box helicase family. CshA subfamily. As to quaternary structure, oligomerizes, may be a member of the RNA degradosome.

The protein localises to the cytoplasm. The enzyme catalyses ATP + H2O = ADP + phosphate + H(+). Functionally, DEAD-box RNA helicase possibly involved in RNA degradation. Unwinds dsRNA in both 5'- and 3'-directions, has RNA-dependent ATPase activity. The protein is DEAD-box ATP-dependent RNA helicase CshA of Staphylococcus epidermidis (strain ATCC 35984 / DSM 28319 / BCRC 17069 / CCUG 31568 / BM 3577 / RP62A).